We begin with the raw amino-acid sequence, 830 residues long: Kinesin-like protein KIN-14B (830 aa).

Positions 56–97 (ENISDDNTESEAKVQKIQDELVSLNAQLKQITLQRREALNNY) form a coiled coil. One can recognise a Kinesin motor domain in the interval 103–425 (NIRVFCRIRP…LGFATRVRSI (323 aa)). ATP is bound at residue 182–189 (GQTGSGKT). Residues 434 to 476 (EMKARKETLLIDLGQKVNDLEHECEDIRRKIKNLEESMEHLTG) are a coiled coil.

Belongs to the TRAFAC class myosin-kinesin ATPase superfamily. Kinesin family. KIN-14 subfamily.

The polypeptide is Kinesin-like protein KIN-14B (Oryza sativa subsp. japonica (Rice)).